A 426-amino-acid chain; its full sequence is Tol-Pal system protein TolB (426 aa).

The first 24 residues, 1-24 (MKLKSRYTSLISVVSIFFSSMVMA), serve as a signal peptide directing secretion.

This sequence belongs to the TolB family. In terms of assembly, the Tol-Pal system is composed of five core proteins: the inner membrane proteins TolA, TolQ and TolR, the periplasmic protein TolB and the outer membrane protein Pal. They form a network linking the inner and outer membranes and the peptidoglycan layer.

Its subcellular location is the periplasm. In terms of biological role, part of the Tol-Pal system, which plays a role in outer membrane invagination during cell division and is important for maintaining outer membrane integrity. In Haemophilus ducreyi (strain 35000HP / ATCC 700724), this protein is Tol-Pal system protein TolB.